We begin with the raw amino-acid sequence, 300 residues long: Ribonuclease HIII (300 aa).

The region spanning 83-300 is the RNase H type-2 domain; that stretch reads IPIIGSDEVG…THKAQALLTK (218 aa). Positions 89, 90, and 194 each coordinate a divalent metal cation.

It belongs to the RNase HII family. RnhC subfamily. It depends on Mn(2+) as a cofactor. The cofactor is Mg(2+).

It localises to the cytoplasm. The enzyme catalyses Endonucleolytic cleavage to 5'-phosphomonoester.. Endonuclease that specifically degrades the RNA of RNA-DNA hybrids. This chain is Ribonuclease HIII, found in Streptococcus pyogenes serotype M3 (strain ATCC BAA-595 / MGAS315).